The primary structure comprises 664 residues: tRNA uridine 5-carboxymethylaminomethyl modification enzyme MnmG (664 aa).

FAD-binding positions include G14–G19, V126, and S183. G277 to F291 provides a ligand contact to NAD(+). Q374 contributes to the FAD binding site.

Belongs to the MnmG family. As to quaternary structure, homodimer. Heterotetramer of two MnmE and two MnmG subunits. Requires FAD as cofactor.

The protein localises to the cytoplasm. In terms of biological role, NAD-binding protein involved in the addition of a carboxymethylaminomethyl (cmnm) group at the wobble position (U34) of certain tRNAs, forming tRNA-cmnm(5)s(2)U34. In Salinibacter ruber (strain DSM 13855 / M31), this protein is tRNA uridine 5-carboxymethylaminomethyl modification enzyme MnmG.